We begin with the raw amino-acid sequence, 295 residues long: tRNA(Ile)-lysidine synthase (295 aa).

An ATP-binding site is contributed by 10-15 (SGGPDS).

This sequence belongs to the tRNA(Ile)-lysidine synthase family.

The protein resides in the cytoplasm. It carries out the reaction cytidine(34) in tRNA(Ile2) + L-lysine + ATP = lysidine(34) in tRNA(Ile2) + AMP + diphosphate + H(+). Ligates lysine onto the cytidine present at position 34 of the AUA codon-specific tRNA(Ile) that contains the anticodon CAU, in an ATP-dependent manner. Cytidine is converted to lysidine, thus changing the amino acid specificity of the tRNA from methionine to isoleucine. This chain is tRNA(Ile)-lysidine synthase, found in Malacoplasma penetrans (strain HF-2) (Mycoplasma penetrans).